Reading from the N-terminus, the 442-residue chain is Cysteine proteinase 4 (442 aa).

Residues 1 to 17 (MRVLSFLCLLLVSYASA) form the signal peptide. The propeptide at 18–111 (KQQFSELQYR…TEEEKIFSTP (94 aa)) is activation peptide. Disulfide bonds link Cys132/Cys178 and Cys169/Cys212. The active site involves Cys135. 2 N-linked (GlcNAc...) asparagine glycosylation sites follow: Asn228 and Asn254. A disulfide bridge links Cys270 with Cys428. His277 is an active-site residue. Residues 286–396 (SGSSSSSGSS…SGSGSGAVEA (111 aa)) form a disordered region. A compositionally biased stretch (low complexity) spans 287–376 (GSSSSSGSSS…SASGQASASG (90 aa)). The span at 377–391 (SGSGSGSGSGSGSGS) shows a compositional bias: gly residues. The active site involves Asn406.

It belongs to the peptidase C1 family. Post-translationally, glycosylated; contains GlcNAc-alpha-1-P-Ser residues and fucose.

It localises to the lysosome. In Dictyostelium discoideum (Social amoeba), this protein is Cysteine proteinase 4 (cprD).